A 615-amino-acid polypeptide reads, in one-letter code: Chaperone protein HscA homolog (615 aa).

The protein belongs to the heat shock protein 70 family.

Functionally, chaperone involved in the maturation of iron-sulfur cluster-containing proteins. Has a low intrinsic ATPase activity which is markedly stimulated by HscB. The sequence is that of Chaperone protein HscA homolog from Aeromonas hydrophila subsp. hydrophila (strain ATCC 7966 / DSM 30187 / BCRC 13018 / CCUG 14551 / JCM 1027 / KCTC 2358 / NCIMB 9240 / NCTC 8049).